Here is a 571-residue protein sequence, read N- to C-terminus: RNA polymerase sigma factor SigA (571 aa).

The segment at 321-391 (MVESNLRLVI…TRAIADQART (71 aa)) is sigma-70 factor domain-2. Residues 345–348 (DLIQ) carry the Interaction with polymerase core subunit RpoC motif. The segment at 400–476 (ETINKVLRGA…DTAVESPAEA (77 aa)) is sigma-70 factor domain-3. Residues 489–542 (VLKTLTDRERFVLIHRFGLLDGRPKTLEEVGSAFNVTRERIRQIEAKALRKMRH) form a sigma-70 factor domain-4 region. The segment at residues 515–534 (LEEVGSAFNVTRERIRQIEA) is a DNA-binding region (H-T-H motif).

It belongs to the sigma-70 factor family. RpoD/SigA subfamily. As to quaternary structure, interacts transiently with the RNA polymerase catalytic core.

Its subcellular location is the cytoplasm. Its function is as follows. Sigma factors are initiation factors that promote the attachment of RNA polymerase to specific initiation sites and are then released. This sigma factor is the primary sigma factor during exponential growth. The polypeptide is RNA polymerase sigma factor SigA (Chlamydia muridarum (strain MoPn / Nigg)).